Here is a 953-residue protein sequence, read N- to C-terminus: Scaffold attachment factor B2 (953 aa).

The segment at 1–29 is disordered; the sequence is MAETLPGSGDSGPGTASLGPGVAETGTRR. Position 2 is an N-acetylalanine (alanine 2). In terms of domain architecture, SAP spans 30–64; that stretch reads LSELRVIDLRAELKKRNLDTGGNKSVLMERLKKAV. The residue at position 54 (serine 54) is a Phosphoserine. Lysine 65 participates in a covalent cross-link: Glycyl lysine isopeptide (Lys-Gly) (interchain with G-Cter in SUMO1); alternate. Lysine 65 is covalently cross-linked (Glycyl lysine isopeptide (Lys-Gly) (interchain with G-Cter in SUMO2); alternate). The disordered stretch occupies residues 91–114; sequence KGLKMEEEGTEDNGLEDDSRDGQE. Lysine 94 is covalently cross-linked (Glycyl lysine isopeptide (Lys-Gly) (interchain with G-Cter in SUMO2)). Acidic residues predominate over residues 98–114; it reads EGTEDNGLEDDSRDGQE. Serine 109 and serine 158 each carry phosphoserine. Residues lysine 188 and lysine 199 each participate in a glycyl lysine isopeptide (Lys-Gly) (interchain with G-Cter in SUMO2) cross-link. Threonine 201 bears the Phosphothreonine mark. Serine 207 bears the Phosphoserine mark. The disordered stretch occupies residues 219–404; sequence ILGETCKSEP…KDEKGRVGSG (186 aa). Positions 224–233 are enriched in basic and acidic residues; that stretch reads CKSEPVKEES. Lysine 230 participates in a covalent cross-link: Glycyl lysine isopeptide (Lys-Gly) (interchain with G-Cter in SUMO). Positions 274 to 285 are enriched in polar residues; sequence SESTAHAQSSKA. A compositionally biased stretch (basic and acidic residues) spans 292–308; the sequence is VKREPAEQPGDGERTDC. Lysine 293 participates in a covalent cross-link: Glycyl lysine isopeptide (Lys-Gly) (interchain with G-Cter in SUMO). Over residues 318–329 the composition is skewed to low complexity; that stretch reads EQSSAASELAEA. The segment covering 345–358 has biased composition (basic and acidic residues); that stretch reads EARDSKEDGRKFDF. The segment covering 370-382 has biased composition (polar residues); sequence ESSTSEGADQKMS. Glycyl lysine isopeptide (Lys-Gly) (interchain with G-Cter in SUMO2) cross-links involve residues lysine 380, lysine 385, lysine 388, lysine 391, and lysine 395. Over residues 383-400 the composition is skewed to basic and acidic residues; that stretch reads SFKEEKDIKPIIKDEKGR. Residues 407–485 form the RRM domain; the sequence is RNLWVSGLSS…RMISVEKAKN (79 aa). Phosphoserine is present on residues serine 507 and serine 513. Residues lysine 517, lysine 524, lysine 525, lysine 541, lysine 542, and lysine 551 each participate in a glycyl lysine isopeptide (Lys-Gly) (interchain with G-Cter in SUMO2) cross-link. Positions 525–551 are enriched in basic and acidic residues; sequence KEEKIEKKEEKKPEDIKKEEKDQDELK. Disordered regions lie at residues 525–665 and 684–953; these read KEEK…RLQR and RERL…TRRY. Residues 555–564 are compositionally biased toward polar residues; that stretch reads TNRSRVTKSG. Basic and acidic residues predominate over residues 567–579; it reads GMERTVVMDKSKG. Residues lysine 578, lysine 586, and lysine 608 each participate in a glycyl lysine isopeptide (Lys-Gly) (interchain with G-Cter in SUMO2) cross-link. 2 stretches are compositionally biased toward basic and acidic residues: residues 590–665 and 684–820; these read RSKE…RLQR and RERL…DSRD. The interaction with SAFB1 stretch occupies residues 600-953; sequence DRKSESKEKR…PPYPHFTRRY (354 aa). Residue lysine 616 forms a Glycyl lysine isopeptide (Lys-Gly) (interchain with G-Cter in SUMO2); alternate linkage. Lysine 616 is modified (N6-acetyllysine; alternate). Residues 713–730 carry the Nuclear localization signal motif; that stretch reads RRQQEQLRYEQERRPGRR. Serine 787 and serine 832 each carry phosphoserine. Positions 843 to 859 are enriched in basic and acidic residues; the sequence is GGRDWGEHNQRLEEHQA. Residues 881-890 are compositionally biased toward gly residues; sequence GERGLSGPSG. Serine 886 carries the phosphoserine modification. Residues arginine 897 and arginine 903 each carry the omega-N-methylarginine modification. Residues 899 to 927 show a composition bias toward gly residues; that stretch reads GVAGRGGFAQGGHSQGHVVPGGGLEGGGV.

As to quaternary structure, interacts with SAFB/SAFB1 and SCAM1. Interacts with isoform 2 SRPK1 and inhibits its activity. As to expression, expressed at high levels in the CNS and at low levels in the liver. Expressed in a wide number of breast cancer cell lines.

It is found in the cytoplasm. The protein localises to the nucleus. Its function is as follows. Binds to scaffold/matrix attachment region (S/MAR) DNA. Can function as an estrogen receptor corepressor and can also inhibit cell proliferation. The polypeptide is Scaffold attachment factor B2 (SAFB2) (Homo sapiens (Human)).